Here is an 84-residue protein sequence, read N- to C-terminus: Alpha-mammal toxin Ts2 (84 aa).

The N-terminal stretch at Met-1–Gly-20 is a signal peptide. One can recognise an LCN-type CS-alpha/beta domain in the interval Lys-21 to Gly-83. 4 disulfides stabilise this stretch: Cys-31/Cys-82, Cys-35/Cys-58, Cys-43/Cys-63, and Cys-47/Cys-65. At Cys-82 the chain carries Cysteine amide.

Belongs to the long (4 C-C) scorpion toxin superfamily. Sodium channel inhibitor family. Beta subfamily. In terms of tissue distribution, expressed by the venom gland.

It localises to the secreted. Alpha toxins bind voltage-independently at site-3 of sodium channels (Nav) and inhibit the inactivation of the activated channels, thereby blocking neuronal transmission. This toxin acts on Nav1.2/SCN2A, Nav1.3/SCN3A, Nav1.5/SCN5A, Nav1.6/SCN8A and Nav1.7/SCN9A voltage-gated sodium channels, with the highest affinity for Nav1.3/SCN3A, followed by Nav1.6/SCN8A and Nav1.7/SCN9A which are affected almost equally. Interestingly, shows a significant shift of the voltage dependence of activation for Nav1.3/SCN3A that is characteristic of beta-toxins. In addition, in presence of LPS, this toxin inhibits the release of NO, IL-6 and TNF-alpha in J774.1 cells. Further, in the absence of LPS, it stimulates the production of the anti-inflammatory cytokine IL-10. This toxin is active on mammals. This chain is Alpha-mammal toxin Ts2, found in Tityus serrulatus (Brazilian scorpion).